The following is a 41-amino-acid chain: Photosystem I reaction center subunit IX (41 aa).

Residues 7–27 (YLSTAPVVAFAWITITAGLLI) traverse the membrane as a helical segment.

Belongs to the PsaJ family.

Its subcellular location is the plastid. It is found in the chloroplast thylakoid membrane. May help in the organization of the PsaE and PsaF subunits. This chain is Photosystem I reaction center subunit IX, found in Oedogonium cardiacum (Filamentous green alga).